Consider the following 324-residue polypeptide: tRNA dimethylallyltransferase (324 aa).

ATP is bound at residue 20–27 (GPTASGKS). 22 to 27 (TASGKS) lines the substrate pocket. Interaction with substrate tRNA regions lie at residues 45 to 48 (DSAL), 168 to 172 (QRLIR), and 284 to 291 (KRQITWLR).

Belongs to the IPP transferase family. As to quaternary structure, monomer. Requires Mg(2+) as cofactor.

It carries out the reaction adenosine(37) in tRNA + dimethylallyl diphosphate = N(6)-dimethylallyladenosine(37) in tRNA + diphosphate. Functionally, catalyzes the transfer of a dimethylallyl group onto the adenine at position 37 in tRNAs that read codons beginning with uridine, leading to the formation of N6-(dimethylallyl)adenosine (i(6)A). In Hydrogenovibrio crunogenus (strain DSM 25203 / XCL-2) (Thiomicrospira crunogena), this protein is tRNA dimethylallyltransferase.